Consider the following 490-residue polypeptide: Aspartyl/glutamyl-tRNA(Asn/Gln) amidotransferase subunit B (490 aa).

It belongs to the GatB/GatE family. GatB subfamily. In terms of assembly, heterotrimer of A, B and C subunits.

The catalysed reaction is L-glutamyl-tRNA(Gln) + L-glutamine + ATP + H2O = L-glutaminyl-tRNA(Gln) + L-glutamate + ADP + phosphate + H(+). It carries out the reaction L-aspartyl-tRNA(Asn) + L-glutamine + ATP + H2O = L-asparaginyl-tRNA(Asn) + L-glutamate + ADP + phosphate + 2 H(+). Allows the formation of correctly charged Asn-tRNA(Asn) or Gln-tRNA(Gln) through the transamidation of misacylated Asp-tRNA(Asn) or Glu-tRNA(Gln) in organisms which lack either or both of asparaginyl-tRNA or glutaminyl-tRNA synthetases. The reaction takes place in the presence of glutamine and ATP through an activated phospho-Asp-tRNA(Asn) or phospho-Glu-tRNA(Gln). The chain is Aspartyl/glutamyl-tRNA(Asn/Gln) amidotransferase subunit B from Methylobacterium radiotolerans (strain ATCC 27329 / DSM 1819 / JCM 2831 / NBRC 15690 / NCIMB 10815 / 0-1).